The chain runs to 314 residues: Malate dehydrogenase (314 aa).

NAD(+)-binding positions include 11–16 and Asp-35; that span reads GSGNIG. 2 residues coordinate substrate: Arg-84 and Arg-90. NAD(+) contacts are provided by residues Asn-97 and 120-122; that span reads ITN. Asn-122 and Arg-153 together coordinate substrate. His-177 serves as the catalytic Proton acceptor.

Belongs to the LDH/MDH superfamily. MDH type 3 family.

The catalysed reaction is (S)-malate + NAD(+) = oxaloacetate + NADH + H(+). Its function is as follows. Catalyzes the reversible oxidation of malate to oxaloacetate. The protein is Malate dehydrogenase of Rickettsia africae (strain ESF-5).